A 441-amino-acid polypeptide reads, in one-letter code: uncharacterized protein (441 aa).

The next 11 membrane-spanning stretches (helical) occupy residues 62-82 (FLSL…FEIG), 88-108 (LILT…KLFG), 112-132 (IALT…IIAL), 154-174 (ALLH…LLVV), 192-212 (WMFF…YLLY), 224-244 (ALMI…GVAS), 247-267 (ANLS…YMVC), 312-332 (IVLF…ATFA), 335-355 (ISVM…IIFL), 363-383 (QGMW…NLLL), and 399-419 (ILCS…LLYA).

It localises to the membrane. This is an uncharacterized protein from Schizosaccharomyces pombe (strain 972 / ATCC 24843) (Fission yeast).